A 302-amino-acid polypeptide reads, in one-letter code: Ribosomal RNA small subunit methyltransferase A (302 aa).

S-adenosyl-L-methionine contacts are provided by N27, L29, G54, E75, D100, and N138.

It belongs to the class I-like SAM-binding methyltransferase superfamily. rRNA adenine N(6)-methyltransferase family. RsmA subfamily.

It localises to the cytoplasm. It catalyses the reaction adenosine(1518)/adenosine(1519) in 16S rRNA + 4 S-adenosyl-L-methionine = N(6)-dimethyladenosine(1518)/N(6)-dimethyladenosine(1519) in 16S rRNA + 4 S-adenosyl-L-homocysteine + 4 H(+). Specifically dimethylates two adjacent adenosines (A1518 and A1519) in the loop of a conserved hairpin near the 3'-end of 16S rRNA in the 30S particle. May play a critical role in biogenesis of 30S subunits. This is Ribosomal RNA small subunit methyltransferase A from Natranaerobius thermophilus (strain ATCC BAA-1301 / DSM 18059 / JW/NM-WN-LF).